A 206-amino-acid chain; its full sequence is MLKTIRKHGITLALFAAGSTGLTAVINQMTKSTIHEQALQQQHALFDQVLPPDRYNNNLQESCYLVDAPALGKGTHRVFIARKDDKPVAAIIEATAPDGYSGAIQLIVGADFNGTVLGTRVTEHHETPGLGDKIERRLSDWITHFSGKTISGENDTHWAVKKDGGDFDQFTGATITPRAVVNAVKRAGLYAESLPAQLPHLTACGE.

A helical transmembrane segment spans residues 9–29 (GITLALFAAGSTGLTAVINQM). Residue T174 is modified to FMN phosphoryl threonine.

This sequence belongs to the RnfG family. As to quaternary structure, the complex is composed of six subunits: RsxA, RsxB, RsxC, RsxD, RsxE and RsxG. The cofactor is FMN.

It is found in the cell inner membrane. Its function is as follows. Part of a membrane-bound complex that couples electron transfer with translocation of ions across the membrane. Required to maintain the reduced state of SoxR. The chain is Ion-translocating oxidoreductase complex subunit G from Salmonella typhimurium (strain LT2 / SGSC1412 / ATCC 700720).